The primary structure comprises 430 residues: Shufflon protein A' (430 aa).

The tract at residues 1 to 361 (MKKYDRGWAS…TGAILSCQSG (361 aa)) is constant region. The tract at residues 362-430 (TWGTIGGKLK…GCIASCVTLN (69 aa)) is variable region.

This is Shufflon protein A' from Escherichia coli.